The following is a 485-amino-acid chain: Glutamate--tRNA ligase (485 aa).

A 'HIGH' region motif is present at residues 11–21 (PSPTGLLHIGN). The 'KMSKS' region motif lies at 255–259 (KLSKR). Lysine 258 provides a ligand contact to ATP.

This sequence belongs to the class-I aminoacyl-tRNA synthetase family. Glutamate--tRNA ligase type 1 subfamily. Monomer.

Its subcellular location is the cytoplasm. It carries out the reaction tRNA(Glu) + L-glutamate + ATP = L-glutamyl-tRNA(Glu) + AMP + diphosphate. Its function is as follows. Catalyzes the attachment of glutamate to tRNA(Glu) in a two-step reaction: glutamate is first activated by ATP to form Glu-AMP and then transferred to the acceptor end of tRNA(Glu). The protein is Glutamate--tRNA ligase of Streptococcus gordonii (strain Challis / ATCC 35105 / BCRC 15272 / CH1 / DL1 / V288).